A 254-amino-acid polypeptide reads, in one-letter code: Enolase-phosphatase E1 (254 aa).

Asp13 and Glu15 together coordinate Mg(2+). Residues 127–128 (SS) and Lys173 each bind substrate. Asp200 serves as a coordination point for Mg(2+).

It belongs to the HAD-like hydrolase superfamily. MasA/MtnC family. As to quaternary structure, monomer. Requires Mg(2+) as cofactor.

The protein resides in the cytoplasm. Its subcellular location is the nucleus. The enzyme catalyses 5-methylsulfanyl-2,3-dioxopentyl phosphate + H2O = 1,2-dihydroxy-5-(methylsulfanyl)pent-1-en-3-one + phosphate. It participates in amino-acid biosynthesis; L-methionine biosynthesis via salvage pathway; L-methionine from S-methyl-5-thio-alpha-D-ribose 1-phosphate: step 3/6. The protein operates within amino-acid biosynthesis; L-methionine biosynthesis via salvage pathway; L-methionine from S-methyl-5-thio-alpha-D-ribose 1-phosphate: step 4/6. Functionally, bifunctional enzyme that catalyzes the enolization of 2,3-diketo-5-methylthiopentyl-1-phosphate (DK-MTP-1-P) into the intermediate 2-hydroxy-3-keto-5-methylthiopentenyl-1-phosphate (HK-MTPenyl-1-P), which is then dephosphorylated to form the acireductone 1,2-dihydroxy-3-keto-5-methylthiopentene (DHK-MTPene). The polypeptide is Enolase-phosphatase E1 (utr4) (Sclerotinia sclerotiorum (strain ATCC 18683 / 1980 / Ss-1) (White mold)).